The sequence spans 249 residues: Ribosomal RNA small subunit methyltransferase J (249 aa).

Residues 101-102, 117-118, 153-154, and Asp171 contribute to the S-adenosyl-L-methionine site; these read RD, ER, and SS.

It belongs to the methyltransferase superfamily. RsmJ family.

Its subcellular location is the cytoplasm. The catalysed reaction is guanosine(1516) in 16S rRNA + S-adenosyl-L-methionine = N(2)-methylguanosine(1516) in 16S rRNA + S-adenosyl-L-homocysteine + H(+). Functionally, specifically methylates the guanosine in position 1516 of 16S rRNA. The polypeptide is Ribosomal RNA small subunit methyltransferase J (Salmonella arizonae (strain ATCC BAA-731 / CDC346-86 / RSK2980)).